Reading from the N-terminus, the 547-residue chain is MPVVTLYWDELERLVGADRDTILSRLPMLGCDIERVEDDHVDVEFFPNRPDLYSVEGVARALRGFLGIEKGLKSYSAVKGEWKITVEESVLAVRPRIVGCVVKGIRMTDEVIRSLMEVQEDLHWTIGRNRRKMAIGVHDLSKVYFPLRYKAVDANFSFVPLDFDREMTVAEILEEHPKGKAYAFILEGKDSYPMIVDSKDEVISFPPIINAEKTRVTEETTDLFIDVTGFDENVDRAIAILACMLADRGGRIESVEVVYPDHVELTPNLDVRFMEVDVDEVNSLLGLSLSAEEIKESLEKMRFSCEIEGEKLKVGIPPYRADIMHEWDVIEDVAIGYGYENITPEIPPTLTFGRTHPWNDIRSLAKEIMIGLGFTEVITFTLTNEAVMYEKMRRKGEPWKDYVPVMHPLTTEHTILRTSLLPKLLELLSYNKHHEMPQMVFEVGDVVVNSKNRLHLAACITHSRANFSEIRSYVQAVMRELDLTWEVRESDDEAFIDGRRAEIVVDGKAVGVFGEVHPEVLEGFELTMPVSAFEIDLSAFFDTGELL.

The 76-residue stretch at 269–344 folds into the B5 domain; the sequence is LDVRFMEVDV…IGYGYENITP (76 aa). Residues Asp322, Asp328, Glu331, and Asp332 each coordinate Mg(2+).

This sequence belongs to the phenylalanyl-tRNA synthetase beta subunit family. Type 2 subfamily. Tetramer of two alpha and two beta subunits. Requires Mg(2+) as cofactor.

Its subcellular location is the cytoplasm. It carries out the reaction tRNA(Phe) + L-phenylalanine + ATP = L-phenylalanyl-tRNA(Phe) + AMP + diphosphate + H(+). The protein is Phenylalanine--tRNA ligase beta subunit of Archaeoglobus fulgidus (strain ATCC 49558 / DSM 4304 / JCM 9628 / NBRC 100126 / VC-16).